The chain runs to 317 residues: Acetylglutamate kinase (317 aa).

Substrate is bound by residues 70 to 71 (GG), arginine 92, and asparagine 191.

This sequence belongs to the acetylglutamate kinase family. ArgB subfamily.

It localises to the cytoplasm. The catalysed reaction is N-acetyl-L-glutamate + ATP = N-acetyl-L-glutamyl 5-phosphate + ADP. It participates in amino-acid biosynthesis; L-arginine biosynthesis; N(2)-acetyl-L-ornithine from L-glutamate: step 2/4. In terms of biological role, catalyzes the ATP-dependent phosphorylation of N-acetyl-L-glutamate. In Corynebacterium glutamicum (strain R), this protein is Acetylglutamate kinase.